Reading from the N-terminus, the 178-residue chain is MSRIGKRIIEIPSSVQASVEGSKLLFKNGKEKHELETHNRVKITLENNQLSFQPVGEDAQSRAYWGTYGALANNIVIGLSTGFSKILEVNGVGYKVALGNKTLDLSLGFSHPVKYPIPAGIEMVVEKNTITIKGSDKQKVGQVAAEIRSFRPPEPYKGKGVKYSDEVIIRKAGKTAKK.

It belongs to the universal ribosomal protein uL6 family. Part of the 50S ribosomal subunit.

In terms of biological role, this protein binds to the 23S rRNA, and is important in its secondary structure. It is located near the subunit interface in the base of the L7/L12 stalk, and near the tRNA binding site of the peptidyltransferase center. The protein is Large ribosomal subunit protein uL6 of Helicobacter pylori (strain HPAG1).